The chain runs to 204 residues: Large ribosomal subunit protein mL67 (204 aa).

The protein belongs to the mitochondrion-specific ribosomal protein mL67 family.

The protein resides in the nucleus. Its subcellular location is the mitochondrion. Functionally, transcription factor involved in regulation of RNA polymerase II-dependent transcription. Also involved in regulation of mitochondrial DNA recombination, maintenance and repair, and generation of homoplasmic cells. The protein is Large ribosomal subunit protein mL67 (MHR1) of Yarrowia lipolytica (strain CLIB 122 / E 150) (Yeast).